The following is a 237-amino-acid chain: Ribonuclease PH (237 aa).

Phosphate is bound by residues Arg86 and 124 to 126 (GTR).

It belongs to the RNase PH family. As to quaternary structure, homohexameric ring arranged as a trimer of dimers.

The catalysed reaction is tRNA(n+1) + phosphate = tRNA(n) + a ribonucleoside 5'-diphosphate. In terms of biological role, phosphorolytic 3'-5' exoribonuclease that plays an important role in tRNA 3'-end maturation. Removes nucleotide residues following the 3'-CCA terminus of tRNAs; can also add nucleotides to the ends of RNA molecules by using nucleoside diphosphates as substrates, but this may not be physiologically important. Probably plays a role in initiation of 16S rRNA degradation (leading to ribosome degradation) during starvation. This is Ribonuclease PH from Beijerinckia indica subsp. indica (strain ATCC 9039 / DSM 1715 / NCIMB 8712).